The sequence spans 72 residues: Translation initiation factor IF-1 1 (72 aa).

Residues 1–72 (MSKDDVIQMA…TRARIIFRAK (72 aa)) enclose the S1-like domain.

This sequence belongs to the IF-1 family. In terms of assembly, component of the 30S ribosomal translation pre-initiation complex which assembles on the 30S ribosome in the order IF-2 and IF-3, IF-1 and N-formylmethionyl-tRNA(fMet); mRNA recruitment can occur at any time during PIC assembly.

It localises to the cytoplasm. Its function is as follows. One of the essential components for the initiation of protein synthesis. Stabilizes the binding of IF-2 and IF-3 on the 30S subunit to which N-formylmethionyl-tRNA(fMet) subsequently binds. Helps modulate mRNA selection, yielding the 30S pre-initiation complex (PIC). Upon addition of the 50S ribosomal subunit IF-1, IF-2 and IF-3 are released leaving the mature 70S translation initiation complex. This chain is Translation initiation factor IF-1 1, found in Polynucleobacter asymbioticus (strain DSM 18221 / CIP 109841 / QLW-P1DMWA-1) (Polynucleobacter necessarius subsp. asymbioticus).